An 85-amino-acid chain; its full sequence is uncharacterized protein (85 aa).

Positions 1-35 (MIEDPSKKISLWQKWINVDPKKRILFSLGLFALSA) are cleaved as a signal peptide.

Its subcellular location is the secreted. This is an uncharacterized protein from Dictyostelium discoideum (Social amoeba).